The chain runs to 360 residues: MKASMLAKLDQLAERLDEVNALLAREDATANIDQYRKLSREHAELSPVAEQYSQYRQAQDDLATAQALLDDPEMKDFAADEIAAARDRLEALQASLQRLLLPKDPNDDRNLLLEIRAGTGGEESALFAADLLRMYTRYAERQRWQVEVMSESESDLGGYKEVIIRIAGDAAFSRLKFESGGHRVQRVPATEAQGRIHTSACTVAVMPEADEVGEVEINPADLRIDTFRASGAGGQHVNKTDSAVRLTHLPTGIVVECQDDRSQHRNKDKAMKVLAARIKDMQTRAAQAREASTRRNLIGSGDRSDRIRTYNFPQGRVTDHRINLTLYKIDMIMDGDMDELLSALSAEHQADQLAALGEDA.

The residue at position 235 (Gln-235) is an N5-methylglutamine.

Belongs to the prokaryotic/mitochondrial release factor family. Post-translationally, methylated by PrmC. Methylation increases the termination efficiency of RF1.

Its subcellular location is the cytoplasm. Functionally, peptide chain release factor 1 directs the termination of translation in response to the peptide chain termination codons UAG and UAA. This is Peptide chain release factor 1 from Cupriavidus taiwanensis (strain DSM 17343 / BCRC 17206 / CCUG 44338 / CIP 107171 / LMG 19424 / R1) (Ralstonia taiwanensis (strain LMG 19424)).